Consider the following 145-residue polypeptide: MTKKYLKVDVVSPLGSVFKGEADIVSLRGSAGEMGIAYGHTELLSTLPAGVVNVRKDEHTDVLYVSGGIVEVTPTRVTIMVDDMERAENLNQAEAEKARARAQEALKNPDASKLDIEAASKRLSEADARLKALNSSKGLYYSKED.

Residues 93 to 104 (AEAEKARARAQE) show a composition bias toward basic and acidic residues. The tract at residues 93-113 (AEAEKARARAQEALKNPDASK) is disordered.

The protein belongs to the ATPase epsilon chain family. As to quaternary structure, F-type ATPases have 2 components, CF(1) - the catalytic core - and CF(0) - the membrane proton channel. CF(1) has five subunits: alpha(3), beta(3), gamma(1), delta(1), epsilon(1). CF(0) has three main subunits: a, b and c.

The protein resides in the cell inner membrane. Its function is as follows. Produces ATP from ADP in the presence of a proton gradient across the membrane. This Francisella philomiragia subsp. philomiragia (strain ATCC 25017 / CCUG 19701 / FSC 153 / O#319-036) protein is ATP synthase epsilon chain.